Consider the following 150-residue polypeptide: 6,7-dimethyl-8-ribityllumazine synthase (150 aa).

5-amino-6-(D-ribitylamino)uracil contacts are provided by residues phenylalanine 11, valine 43 to aspartate 45, and alanine 67 to isoleucine 69. (2S)-2-hydroxy-3-oxobutyl phosphate is bound at residue alanine 72–threonine 73. Catalysis depends on histidine 75, which acts as the Proton donor. Leucine 100 contributes to the 5-amino-6-(D-ribitylamino)uracil binding site. Arginine 115 is a binding site for (2S)-2-hydroxy-3-oxobutyl phosphate.

The protein belongs to the DMRL synthase family.

It catalyses the reaction (2S)-2-hydroxy-3-oxobutyl phosphate + 5-amino-6-(D-ribitylamino)uracil = 6,7-dimethyl-8-(1-D-ribityl)lumazine + phosphate + 2 H2O + H(+). It functions in the pathway cofactor biosynthesis; riboflavin biosynthesis; riboflavin from 2-hydroxy-3-oxobutyl phosphate and 5-amino-6-(D-ribitylamino)uracil: step 1/2. Its function is as follows. Catalyzes the formation of 6,7-dimethyl-8-ribityllumazine by condensation of 5-amino-6-(D-ribitylamino)uracil with 3,4-dihydroxy-2-butanone 4-phosphate. This is the penultimate step in the biosynthesis of riboflavin. This is 6,7-dimethyl-8-ribityllumazine synthase from Pyrobaculum calidifontis (strain DSM 21063 / JCM 11548 / VA1).